The following is a 280-amino-acid chain: UDP-3-O-acyl-N-acetylglucosamine deacetylase (280 aa).

Zn(2+) contacts are provided by His79, His237, and Asp241. The Proton donor role is filled by His264.

This sequence belongs to the LpxC family. The cofactor is Zn(2+).

It catalyses the reaction a UDP-3-O-[(3R)-3-hydroxyacyl]-N-acetyl-alpha-D-glucosamine + H2O = a UDP-3-O-[(3R)-3-hydroxyacyl]-alpha-D-glucosamine + acetate. It functions in the pathway glycolipid biosynthesis; lipid IV(A) biosynthesis; lipid IV(A) from (3R)-3-hydroxytetradecanoyl-[acyl-carrier-protein] and UDP-N-acetyl-alpha-D-glucosamine: step 2/6. Functionally, catalyzes the hydrolysis of UDP-3-O-myristoyl-N-acetylglucosamine to form UDP-3-O-myristoylglucosamine and acetate, the committed step in lipid A biosynthesis. In Chlamydia felis (strain Fe/C-56) (Chlamydophila felis), this protein is UDP-3-O-acyl-N-acetylglucosamine deacetylase.